The chain runs to 55 residues: uncharacterized protein (55 aa).

This is an uncharacterized protein from Acidithiobacillus ferrooxidans (Thiobacillus ferrooxidans).